The following is a 135-amino-acid chain: HTH-type transcriptional repressor RghR (135 aa).

The region spanning 8–63 (LRALREERKLTVNQLATYSGVSAAGISRIENGKRGVPKPATIKKLAEALKIPYEGL) is the HTH cro/C1-type domain. The H-T-H motif DNA-binding region spans 19–38 (VNQLATYSGVSAAGISRIEN).

In terms of biological role, represses the expression of yvaM and both rapG and rapH. Binds directly to the promoter regions of yvaM, rapG and rapH. The polypeptide is HTH-type transcriptional repressor RghR (rghR) (Bacillus subtilis (strain 168)).